We begin with the raw amino-acid sequence, 220 residues long: Probable nicotinate-nucleotide adenylyltransferase (220 aa).

This sequence belongs to the NadD family.

The enzyme catalyses nicotinate beta-D-ribonucleotide + ATP + H(+) = deamido-NAD(+) + diphosphate. It functions in the pathway cofactor biosynthesis; NAD(+) biosynthesis; deamido-NAD(+) from nicotinate D-ribonucleotide: step 1/1. Functionally, catalyzes the reversible adenylation of nicotinate mononucleotide (NaMN) to nicotinic acid adenine dinucleotide (NaAD). The chain is Probable nicotinate-nucleotide adenylyltransferase from Yersinia pseudotuberculosis serotype O:1b (strain IP 31758).